We begin with the raw amino-acid sequence, 776 residues long: 1,4-alpha-glucan branching enzyme GlgB (776 aa).

D431 acts as the Nucleophile in catalysis. The Proton donor role is filled by E484.

It belongs to the glycosyl hydrolase 13 family. GlgB subfamily. In terms of assembly, monomer.

It carries out the reaction Transfers a segment of a (1-&gt;4)-alpha-D-glucan chain to a primary hydroxy group in a similar glucan chain.. Its pathway is glycan biosynthesis; glycogen biosynthesis. In terms of biological role, catalyzes the formation of the alpha-1,6-glucosidic linkages in glycogen by scission of a 1,4-alpha-linked oligosaccharide from growing alpha-1,4-glucan chains and the subsequent attachment of the oligosaccharide to the alpha-1,6 position. The polypeptide is 1,4-alpha-glucan branching enzyme GlgB (Trichodesmium erythraeum (strain IMS101)).